The chain runs to 96 residues: uncharacterized protein (96 aa).

The tract at residues 35–96 (SPSGEKRSTK…KKFSSPPHPK (62 aa)) is disordered. Positions 38–52 (GEKRSTKNQTKENTK) are enriched in basic and acidic residues. Over residues 69–80 (ANQQTNENSKPL) the composition is skewed to polar residues.

This is an uncharacterized protein from Dictyostelium discoideum (Social amoeba).